The sequence spans 317 residues: MAAPMELFCWSGGWGLPSVDLDSLAVLTYARFTGAPLKVHKITNPWRSPSGTLPALRTSQGEVISVPHKIITHLRKEKYNADYDLSARQGADTLAFMSLLEEKLLPVLIHTFWVDAKNYVEVTRKWYAEAMPFPLNFFLPGRMQRQYMERLQLLCGEHRPEEEEELEKELYQEARECLTLLSQRLGAQKFFFGDAPASLDAFVFSYLALLQQAKLPSGKLQAHLRGLHNLCAYCTHILSLYFPWEGAEVPRPRQTPASSETEEEPYRRRNQILSVLAGLAAMAGYALLSGIVSIQRAPPARAPSTRALGMAEEDEEE.

Glycyl lysine isopeptide (Lys-Gly) (interchain with G-Cter in ubiquitin) cross-links involve residues Lys38, Lys41, and Lys78. A helical transmembrane segment spans residues 164–184 (EELEKELYQEARECLTLLSQR).

It belongs to the metaxin family. In terms of assembly, interacts with MTX2/metaxin-2. Associates with the mitochondrial contact site and cristae organizing system (MICOS) complex, composed of at least MICOS10/MIC10, CHCHD3/MIC19, CHCHD6/MIC25, APOOL/MIC27, IMMT/MIC60, APOO/MIC23/MIC26 and QIL1/MIC13. This complex was also known under the names MINOS or MitOS complex. The MICOS complex associates with mitochondrial outer membrane proteins SAMM50, MTX1 and MTX2 (together described as components of the mitochondrial outer membrane sorting assembly machinery (SAM) complex) and DNAJC11, mitochondrial inner membrane protein TMEM11 and with HSPA9. The MICOS and SAM complexes together with DNAJC11 are part of a large protein complex spanning both membranes termed the mitochondrial intermembrane space bridging (MIB) complex. Interacts with ARMC1. In terms of processing, ubiquitinated by PRKN during mitophagy, leading to its degradation and enhancement of mitophagy. Deubiquitinated by USP30.

It localises to the mitochondrion outer membrane. Its function is as follows. Involved in transport of proteins into the mitochondrion. Essential for embryonic development. The protein is Metaxin-1 (MTX1) of Sus scrofa (Pig).